The following is a 459-amino-acid chain: Bifunctional protein GlmU (459 aa).

The segment at 1–230 is pyrophosphorylase; sequence MSNRFAVILA…FDETLGVNDR (230 aa). Residues 9 to 12, lysine 23, glutamine 73, and 78 to 79 each bind UDP-N-acetyl-alpha-D-glucosamine; these read LAAG and GT. Aspartate 103 provides a ligand contact to Mg(2+). Positions 140, 155, 170, and 228 each coordinate UDP-N-acetyl-alpha-D-glucosamine. Mg(2+) is bound at residue asparagine 228. Residues 231–251 form a linker region; that stretch reads VALSQAEIIMKNRINRKNMVN. An N-acetyltransferase region spans residues 252-459; sequence GVTIIDPSNT…VDQLLNKKKS (208 aa). UDP-N-acetyl-alpha-D-glucosamine-binding residues include arginine 333 and lysine 351. Catalysis depends on histidine 363, which acts as the Proton acceptor. UDP-N-acetyl-alpha-D-glucosamine is bound by residues tyrosine 366 and asparagine 377. Acetyl-CoA contacts are provided by residues 386-387, alanine 423, and arginine 440; that span reads NY.

It in the N-terminal section; belongs to the N-acetylglucosamine-1-phosphate uridyltransferase family. The protein in the C-terminal section; belongs to the transferase hexapeptide repeat family. Homotrimer. Mg(2+) serves as cofactor.

Its subcellular location is the cytoplasm. It catalyses the reaction alpha-D-glucosamine 1-phosphate + acetyl-CoA = N-acetyl-alpha-D-glucosamine 1-phosphate + CoA + H(+). It carries out the reaction N-acetyl-alpha-D-glucosamine 1-phosphate + UTP + H(+) = UDP-N-acetyl-alpha-D-glucosamine + diphosphate. Its pathway is nucleotide-sugar biosynthesis; UDP-N-acetyl-alpha-D-glucosamine biosynthesis; N-acetyl-alpha-D-glucosamine 1-phosphate from alpha-D-glucosamine 6-phosphate (route II): step 2/2. It participates in nucleotide-sugar biosynthesis; UDP-N-acetyl-alpha-D-glucosamine biosynthesis; UDP-N-acetyl-alpha-D-glucosamine from N-acetyl-alpha-D-glucosamine 1-phosphate: step 1/1. It functions in the pathway bacterial outer membrane biogenesis; LPS lipid A biosynthesis. In terms of biological role, catalyzes the last two sequential reactions in the de novo biosynthetic pathway for UDP-N-acetylglucosamine (UDP-GlcNAc). The C-terminal domain catalyzes the transfer of acetyl group from acetyl coenzyme A to glucosamine-1-phosphate (GlcN-1-P) to produce N-acetylglucosamine-1-phosphate (GlcNAc-1-P), which is converted into UDP-GlcNAc by the transfer of uridine 5-monophosphate (from uridine 5-triphosphate), a reaction catalyzed by the N-terminal domain. The protein is Bifunctional protein GlmU of Bacillus cereus (strain ZK / E33L).